The primary structure comprises 144 residues: Large ribosomal subunit protein uL11 (144 aa).

It belongs to the universal ribosomal protein uL11 family. In terms of assembly, part of the ribosomal stalk of the 50S ribosomal subunit. Interacts with L10 and the large rRNA to form the base of the stalk. L10 forms an elongated spine to which L12 dimers bind in a sequential fashion forming a multimeric L10(L12)X complex. In terms of processing, one or more lysine residues are methylated.

Functionally, forms part of the ribosomal stalk which helps the ribosome interact with GTP-bound translation factors. This chain is Large ribosomal subunit protein uL11, found in Rhodococcus erythropolis (strain PR4 / NBRC 100887).